Here is a 355-residue protein sequence, read N- to C-terminus: Probable dual-specificity RNA methyltransferase RlmN (355 aa).

Glu107 functions as the Proton acceptor in the catalytic mechanism. A Radical SAM core domain is found at 113–341; sequence TDKRLTVCVS…VSVRYSRGLE (229 aa). Cys120 and Cys346 are oxidised to a cystine. 3 residues coordinate [4Fe-4S] cluster: Cys127, Cys131, and Cys134. S-adenosyl-L-methionine-binding positions include 174 to 175, Ser204, 227 to 229, and Asn303; these read GE and SLH. Catalysis depends on Cys346, which acts as the S-methylcysteine intermediate.

Belongs to the radical SAM superfamily. RlmN family. Requires [4Fe-4S] cluster as cofactor.

It is found in the cytoplasm. It carries out the reaction adenosine(2503) in 23S rRNA + 2 reduced [2Fe-2S]-[ferredoxin] + 2 S-adenosyl-L-methionine = 2-methyladenosine(2503) in 23S rRNA + 5'-deoxyadenosine + L-methionine + 2 oxidized [2Fe-2S]-[ferredoxin] + S-adenosyl-L-homocysteine. The enzyme catalyses adenosine(37) in tRNA + 2 reduced [2Fe-2S]-[ferredoxin] + 2 S-adenosyl-L-methionine = 2-methyladenosine(37) in tRNA + 5'-deoxyadenosine + L-methionine + 2 oxidized [2Fe-2S]-[ferredoxin] + S-adenosyl-L-homocysteine. Functionally, specifically methylates position 2 of adenine 2503 in 23S rRNA and position 2 of adenine 37 in tRNAs. This is Probable dual-specificity RNA methyltransferase RlmN from Trichormus variabilis (strain ATCC 29413 / PCC 7937) (Anabaena variabilis).